Reading from the N-terminus, the 311-residue chain is DNA-directed RNA polymerase subunit alpha (311 aa).

The interval 1 to 227 (MNNISIKCLK…DLFTLLINNK (227 aa)) is alpha N-terminal domain (alpha-NTD). The tract at residues 242-311 (ISIEPYTNIA…LKNKLGIILK (70 aa)) is alpha C-terminal domain (alpha-CTD).

This sequence belongs to the RNA polymerase alpha chain family. In terms of assembly, in plastids the minimal PEP RNA polymerase catalytic core is composed of four subunits: alpha, beta, beta', and beta''. When a (nuclear-encoded) sigma factor is associated with the core the holoenzyme is formed, which can initiate transcription.

The protein resides in the plastid. It localises to the chloroplast. The enzyme catalyses RNA(n) + a ribonucleoside 5'-triphosphate = RNA(n+1) + diphosphate. Functionally, DNA-dependent RNA polymerase catalyzes the transcription of DNA into RNA using the four ribonucleoside triphosphates as substrates. The sequence is that of DNA-directed RNA polymerase subunit alpha from Phaeodactylum tricornutum (strain CCAP 1055/1).